The chain runs to 399 residues: MIQVSLPFTREEYAGRLWKVRTEMASRGIDVLVISDPSNMAWLTGYDGWSFYVHQCVLLGLEGEPVWYGRRMDANGALRTCWMDPDNITYYPDHYVQNPDMHPMDYLAQTILPDRGWHEGVVGMEMDNYYFSAKAYQCLLRELPHARFADANSLVNWCRAIKSPQEIEYMRVAGKIVAGMHSRILEVIEPGLPKSKLVSEIYRVGIEGWTSPEGKVFGGDYPAIVPMLPTGKDAAAPHLTWDDSPFREGEGTFFEIAGVYKRYHAPMSRTVYLGRPPSEFVRAESALLEGIENGLEVAKPGNRTADIAMALGAAMDKYGFDRGGARCGYPIGISYPPDWGERTMSLRPSDETILEPGMTFHFMPGLWVEDWGLEITESILITESGCETLADFPRQLFVK.

The protein belongs to the peptidase M24 family.

The protein localises to the cytoplasm. It carries out the reaction L-ectoine + H2O = (2S)-2-acetamido-4-aminobutanoate. Involved in the degradation of ectoine, which allows H.elongata to utilize ectoine as both a carbon and a nitrogen source for growth. Catalyzes the hydrolysis of ectoine to N-acetyl-L-2,4-diaminobutyric acid (N-Ac-DABA). It can produce both isoforms N-gamma-acetyl-L-2,4-diaminobutyric acid (N-gamma-Ac-DABA) and N-alpha-acetyl-L-2,4-diaminobutyric acid (-Nalpha-Ac-DABA), however N-alpha-Ac-DABA is the essential substrate for the subsequent catabolic enzyme DoeB. This Halomonas elongata (strain ATCC 33173 / DSM 2581 / NBRC 15536 / NCIMB 2198 / 1H9) protein is Ectoine hydrolase.